A 1720-amino-acid polypeptide reads, in one-letter code: MKGSTLREGTAMASPLPQDMEEELAPVGSEPGDPRAKPPVKPKPRGLPSKPALPAKPSLLVPVGPRPPRGPLAELPSARKMNMLAGPQPYGVSKRPLPFAPRPSAEATAGGDVTQESGKEDAGKEDLPPLTPPARCAALGGVRKAPAPFRPSSERFAACTVEEILAKMEQPRKEILASPDRLWGSRLTFNHDGSSRYGPRTYGAPCPREEDSKSPAKGRSQEGTAEIPAECQEEHSKTPEERNLTSSPAMNGDLAKLACSEAPTDVSKTWVTSSADPVSEHGGSTSAVRLANISVPASESPRLSSRPSSPCHSQLSETQSPAASEASSICLPVTPASPSAVLPAEPPGHSPSSELPAEAAPETLSPNSSPVETVSGHHSPEQPPVLLPQLLTEGAELPDITRTFPCGEEAAARGHTESRPSSLAQRRFSEGVLQPPSQDQEKLGGSLATLPQGQGSQSALDRPFGSGTESNWSLSQSFEWTFPTRPSGLGVWRLDSPPPSPITEASEAAEAAEADSWAVSGRGEGVSQVGPGTPPAPESPRKPISGVQGNDPGISLPQRDDGESQPRSPALLPSTVEGPPGAPLLQAKENYEDQEPLVGHESPITLAAREAALPVLEPALGQQQPTPSDQPCILFVDVPDPEQALSTEEDVVTLGWAETTLPMTEAQEPCSVSPEPTGPESSSRWLDDLLASPPPNSGSARRAAGAELKDRQSPSTCSEGLLGWAQKDLQSEFGVATDSHHSSFGSSSWSQDTSQNYSLGGRSPVGDTGLGKRDWSSKCGQGSGEGSTREWASRHSLGQEVIGIGGSQDESEVPVRERAVGRPAQLGAQGLEADAQQWEFGKRESQDPHSIHDKELQDQEFGKRDSLGSFSTRDASLQDWEFGKRASVSTNQDTDENDQELGMKNLSRGYSSQDAEEQDREFEKRDSVLDIHGSRATAQQNQEFGKSAWFQDYSSGGGGSRVLGSQERGFGIRSLSSGFSPEEAQQQDEEFEKKTPVGEDRFCEASRDVGHLEEGASGGLLSPSTPHSRDGAARPKDEGSWQDGDSSQEITRLQGRMQAESQSPTNVDLEDKEREQRGWAGEFSLGVAAQSEAAFSPGRQDWSRDVCVEASESSYQFGIIGNDRVSGAGLSPSRKSGGGHFVPPGETKAGAVDWTDQLGLRNLEVSSCVSSEGPSEARENVVGQMGWSDSLGLNNGDLARRLGTGESEEPRSLGVGEKDWTSSVEARNRDLPGQAEVGRHSQARESGVGEPDWSGAEAGEFLKSRERGVGQADWTPDLGLRNMAPGAGCSPGEPRELGVGQVDWGDDLGLRNLEVSCDLESGGSRGCGVGQMDWAQDLGLRNLRLCGAPSEVRECGVGRVGPDLELDPKSSGSLSPGLETEDPLEARELGVGEISGPETQGEDSSSPSFETPSEDTGMDTGEAPSLGASPSSCLTRSPPSGSQSLLEGIMTASSSKGAPQRESAASGSRVLLEEEGLAAGAGQGEPQEPSRAPLPSSRPQPDGEASQVEEVDGTWSLTGAARQNEQASAPPPRRPPRGLLPSCPSEDFSFIEDTEILDSAMYRSRANLGRKRGHRAPAIRPGGTLGLSETADSDTRLFQDSTEPRASRVPSSDEEVVEEPQSRRTRMSLGTKGLKVNLFPGLSPSALKAKLRSRNRSAEEGEVTESKSSQKESSVQRSKSCKVPGLGKPLTLPPKPEKSSGSEGSSPNWLQALKLKKKKI.

Positions 1–137 (MKGSTLREGT…PPLTPPARCA (137 aa)) are disordered. S14 is modified (phosphoserine). Basic and acidic residues predominate over residues 117–127 (SGKEDAGKEDL). T131 is subject to Phosphothreonine. Phosphoserine occurs at positions 178 and 220. Disordered regions lie at residues 185–472 (SRLT…ESNW) and 485–595 (RPSG…EDQE). The interval 209–1563 (EEDSKSPAKG…TEILDSAMYR (1355 aa)) is acidic. Residues 232-243 (QEEHSKTPEERN) are compositionally biased toward basic and acidic residues. T238 carries the post-translational modification Phosphothreonine. Residues 266–287 (VSKTWVTSSADPVSEHGGSTSA) show a composition bias toward polar residues. A phosphoserine mark is found at S286 and S300. The segment covering 296–316 (PASESPRLSSRPSSPCHSQLS) has biased composition (low complexity). A compositionally biased stretch (polar residues) spans 317 to 327 (ETQSPAASEAS). S429 and S437 each carry phosphoserine. Polar residues predominate over residues 449–459 (TLPQGQGSQSA). Phosphoserine occurs at positions 496 and 500. A compositionally biased stretch (low complexity) spans 502-518 (ITEASEAAEAAEADSWA). 2 positions are modified to phosphothreonine: T503 and T533. A phosphoserine mark is found at S539, S568, S602, S673, S692, and S713. Disordered stretches follow at residues 659 to 720 (TTLP…CSEG), 734 to 924 (GVAT…EFEK), and 955 to 1081 (SGGG…GWAG). Low complexity predominate over residues 742–758 (SSFGSSSWSQDTSQNYS). 14 positions are modified to phosphoserine: S763, S796, S807, S845, S866, S871, S876, S887, S912, S976, S980, S1006, S1017, and S1022. A compositionally biased stretch (basic and acidic residues) spans 840–866 (FGKRESQDPHSIHDKELQDQEFGKRDS). Basic and acidic residues predominate over residues 991–1014 (FEKKTPVGEDRFCEASRDVGHLEE). The span at 1027–1039 (HSRDGAARPKDEG) shows a compositional bias: basic and acidic residues. A phosphoserine mark is found at S1047, S1063, S1084, S1096, S1126, S1131, S1171, S1212, S1241, and S1246. The disordered stretch occupies residues 1128–1153 (AGLSPSRKSGGGHFVPPGETKAGAVD). A disordered region spans residues 1198–1255 (LARRLGTGESEEPRSLGVGEKDWTSSVEARNRDLPGQAEVGRHSQARESGVGEPDWSG). Over residues 1208-1230 (EEPRSLGVGEKDWTSSVEARNRD) the composition is skewed to basic and acidic residues. Phosphothreonine is present on T1275. Residues S1290, S1321, S1324, S1373, and S1375 each carry the phosphoserine modification. The segment at 1358–1546 (GRVGPDLELD…RGLLPSCPSE (189 aa)) is disordered. Residues 1402 to 1411 (EDSSSPSFET) show a composition bias toward polar residues. Residues S1425, S1429, S1437, S1440, S1442, S1463, and S1466 each carry the phosphoserine modification. The segment covering 1428–1457 (ASPSSCLTRSPPSGSQSLLEGIMTASSSKG) has biased composition (polar residues). The segment at 1440 to 1532 (SGSQSLLEGI…QNEQASAPPP (93 aa)) is tankyrase-binding. Low complexity predominate over residues 1477-1489 (LAAGAGQGEPQEP). At S1496 the chain carries Phosphoserine. Over residues 1515 to 1527 (WSLTGAARQNEQA) the composition is skewed to polar residues. A Phosphoserine modification is found at S1549. T1554 carries the post-translational modification Phosphothreonine. Residues 1567-1720 (NLGRKRGHRA…QALKLKKKKI (154 aa)) form a disordered region. Residues 1568-1577 (LGRKRGHRAP) are compositionally biased toward basic residues. Over residues 1593–1606 (SDTRLFQDSTEPRA) the composition is skewed to basic and acidic residues. A phosphoserine mark is found at S1611, S1612, and S1622. Residues 1620–1626 (PQSRRTR) carry the Nuclear localization signal motif. K1635 is subject to N6-methyllysine. 2 positions are modified to phosphoserine: S1643 and S1657. A compositionally biased stretch (basic and acidic residues) spans 1656-1670 (RSAEEGEVTESKSSQ). Residues 1671–1690 (KESSVQRSKSCKVPGLGKPL) show a composition bias toward low complexity. S1706 is subject to Phosphoserine. The short motif at 1714-1719 (KLKKKK) is the Nuclear localization signal element.

As to quaternary structure, binds to the ANK repeat domain of TNKS1 and TNKS2. Post-translationally, ADP-ribosylated by TNKS1.

The protein resides in the nucleus. The protein localises to the cytoplasm. Its subcellular location is the cytoskeleton. It localises to the chromosome. The protein is 182 kDa tankyrase-1-binding protein (Tnks1bp1) of Mus musculus (Mouse).